Here is a 183-residue protein sequence, read N- to C-terminus: ATP synthase subunit delta (183 aa).

Belongs to the ATPase delta chain family. F-type ATPases have 2 components, F(1) - the catalytic core - and F(0) - the membrane proton channel. F(1) has five subunits: alpha(3), beta(3), gamma(1), delta(1), epsilon(1). CF(0) has four main subunits: a(1), b(1), b'(1) and c(10-14). The alpha and beta chains form an alternating ring which encloses part of the gamma chain. F(1) is attached to F(0) by a central stalk formed by the gamma and epsilon chains, while a peripheral stalk is formed by the delta, b and b' chains.

The protein localises to the cellular thylakoid membrane. In terms of biological role, f(1)F(0) ATP synthase produces ATP from ADP in the presence of a proton or sodium gradient. F-type ATPases consist of two structural domains, F(1) containing the extramembraneous catalytic core and F(0) containing the membrane proton channel, linked together by a central stalk and a peripheral stalk. During catalysis, ATP synthesis in the catalytic domain of F(1) is coupled via a rotary mechanism of the central stalk subunits to proton translocation. Its function is as follows. This protein is part of the stalk that links CF(0) to CF(1). It either transmits conformational changes from CF(0) to CF(1) or is implicated in proton conduction. The protein is ATP synthase subunit delta of Nostoc sp. (strain PCC 7120 / SAG 25.82 / UTEX 2576).